A 306-amino-acid chain; its full sequence is ATP phosphoribosyltransferase (306 aa).

It belongs to the ATP phosphoribosyltransferase family.

The protein resides in the cytoplasm. It catalyses the reaction 1-(5-phospho-beta-D-ribosyl)-ATP + diphosphate = 5-phospho-alpha-D-ribose 1-diphosphate + ATP. Its pathway is amino-acid biosynthesis; L-histidine biosynthesis; L-histidine from 5-phospho-alpha-D-ribose 1-diphosphate: step 1/9. Its function is as follows. Catalyzes the condensation of ATP and 5-phosphoribose 1-diphosphate to form N'-(5'-phosphoribosyl)-ATP (PR-ATP). Has a crucial role in the pathway because the rate of histidine biosynthesis seems to be controlled primarily by regulation of the enzymatic activity. This is ATP phosphoribosyltransferase (HIS1) from Candida glabrata (strain ATCC 2001 / BCRC 20586 / JCM 3761 / NBRC 0622 / NRRL Y-65 / CBS 138) (Yeast).